Reading from the N-terminus, the 733-residue chain is Alpha-galactosidase 1 (733 aa).

The active-site Nucleophile is the aspartate 480. The active-site Proton donor is the aspartate 550.

Belongs to the glycosyl hydrolase 36 family.

It catalyses the reaction Hydrolysis of terminal, non-reducing alpha-D-galactose residues in alpha-D-galactosides, including galactose oligosaccharides, galactomannans and galactolipids.. Its function is as follows. Alpha-galactosidase associated with the raffinose operon. This chain is Alpha-galactosidase 1 (agaR), found in Pediococcus pentosaceus.